The sequence spans 471 residues: Ammonium transporter Rh type B (471 aa).

At 1-13 (MAGSPSRAAGRRL) the chain is on the cytoplasmic side. Residues 14–33 (QLPLLSFLQGATAVLFAVFV) traverse the membrane as a helical segment. The Extracellular portion of the chain corresponds to 34–60 (RYNHKTDAALWHRGNHSNADNEFYFRY). Residue Asn48 is glycosylated (N-linked (GlcNAc...) asparagine). Residues 61–81 (PSFQDVHAMVFVGFGFLMVFL) traverse the membrane as a helical segment. The Cytoplasmic portion of the chain corresponds to 82-85 (QRYG). A helical membrane pass occupies residues 86 to 106 (FSSVGFTFLLAAFALQWSTLV). At 107-123 (QGFLHSFHGGHIHVGVE) the chain is on the extracellular side. Residues 124–144 (SMINADFCAGAVLISFGAVLG) traverse the membrane as a helical segment. Residues 145–148 (KTGP) are Cytoplasmic-facing. Residues 149–169 (AQLLLMALLEVVLFGINEFVL) traverse the membrane as a helical segment. The Extracellular segment spans residues 170-177 (LHLLGVRD). Residues 178–200 (AGGSMTIHTFGAYFGLVLSQVLY) traverse the membrane as a helical segment. Residues 201-217 (RPQLEKSKHRQGLYHSD) lie on the Cytoplasmic side of the membrane. Residues 218-238 (LFAMIGTIFLWIFWPSFNAAL) form a helical membrane-spanning segment. Over 239-249 (TSLGAGQHRTA) the chain is Extracellular. Residues 250-270 (LNTYYSLAASTLGTFALSALV) form a helical membrane-spanning segment. At 271–280 (GEDGRLDMVH) the chain is on the cytoplasmic side. Residues 281 to 301 (IQNAALAGRVVVGTSSEMMLT) traverse the membrane as a helical segment. Position 302 (Pro302) is a topological domain, extracellular. A helical transmembrane segment spans residues 303-323 (FGALAAGFLAGTVSTLGYKFF). The Cytoplasmic portion of the chain corresponds to 324–344 (TPILESKFKVQDTCGVHNLHG). The helical transmembrane segment at 345–365 (MPGVLGVLLGVLVAGLATHEA) threads the bilayer. At 366–391 (YGDGLESVFPLIAEGQRSATSQAMYQ) the chain is on the extracellular side. A helical transmembrane segment spans residues 392–412 (LFGLFVTLMFASVGGGLGGLL). Over 413 to 471 (LKLPFLDSPPDSQCYEDQVHWQAPGATLSPLPTPAFQVPGEHEDKAQRPLRVEEADTQA) the chain is Cytoplasmic. The interval 414-422 (KLPFLDSPP) is interaction with ANK3. The Basolateral sorting signal signature appears at 427 to 430 (YEDQ). Residues 437–471 (GATLSPLPTPAFQVPGEHEDKAQRPLRVEEADTQA) form a disordered region. The segment covering 452–471 (GEHEDKAQRPLRVEEADTQA) has biased composition (basic and acidic residues).

The protein belongs to the ammonium transporter (TC 2.A.49) family. Rh subfamily. Interacts (via C-terminus) with ANK2 and ANK3; required for targeting to the basolateral membrane. N-glycosylated.

It is found in the cell membrane. It localises to the basolateral cell membrane. It carries out the reaction NH4(+)(in) = NH4(+)(out). It catalyses the reaction methylamine(out) = methylamine(in). The catalysed reaction is CO2(out) = CO2(in). Its function is as follows. Ammonium transporter involved in the maintenance of acid-base homeostasis. Transports ammonium and its related derivative methylammonium across the basolateral plasma membrane of epithelial cells likely contributing to renal transepithelial ammonia transport and ammonia metabolism. May transport either NH4(+) or NH3 ammonia species predominantly mediating an electrogenic NH4(+) transport. May act as a CO2 channel providing for renal acid secretion. The chain is Ammonium transporter Rh type B (RHBG) from Pongo pygmaeus (Bornean orangutan).